The following is a 929-amino-acid chain: DNA mismatch repair protein MutS (929 aa).

The interval 22 to 46 (PAAPRSTGSAAAPPPSPAVLDDRSG) is disordered. A compositionally biased stretch (low complexity) spans 23–32 (AAPRSTGSAA). 678-685 (GPNMAGKS) lines the ATP pocket.

Belongs to the DNA mismatch repair MutS family.

Functionally, this protein is involved in the repair of mismatches in DNA. It is possible that it carries out the mismatch recognition step. This protein has a weak ATPase activity. This is DNA mismatch repair protein MutS from Rhodospirillum rubrum (strain ATCC 11170 / ATH 1.1.1 / DSM 467 / LMG 4362 / NCIMB 8255 / S1).